Here is a 514-residue protein sequence, read N- to C-terminus: Glucose-6-phosphate 1-dehydrogenase 2 (514 aa).

NADP(+)-binding residues include arginine 69 and lysine 176. Substrate-binding residues include histidine 206, lysine 210, glutamate 244, and aspartate 263. The active-site Proton acceptor is the histidine 268. Substrate is bound at residue lysine 366.

The protein belongs to the glucose-6-phosphate dehydrogenase family.

The enzyme catalyses D-glucose 6-phosphate + NADP(+) = 6-phospho-D-glucono-1,5-lactone + NADPH + H(+). The protein operates within carbohydrate degradation; pentose phosphate pathway; D-ribulose 5-phosphate from D-glucose 6-phosphate (oxidative stage): step 1/3. In terms of biological role, catalyzes the oxidation of glucose 6-phosphate to 6-phosphogluconolactone. This chain is Glucose-6-phosphate 1-dehydrogenase 2, found in Mycobacterium bovis (strain ATCC BAA-935 / AF2122/97).